The chain runs to 264 residues: Thymidylate synthase (264 aa).

DUMP is bound at residue arginine 21. Histidine 51 contacts (6R)-5,10-methylene-5,6,7,8-tetrahydrofolate. Residue 126–127 (RR) participates in dUMP binding. The active-site Nucleophile is cysteine 146. Residues 166 to 169 (RSAD), asparagine 177, and 207 to 209 (HIY) contribute to the dUMP site. Residue aspartate 169 participates in (6R)-5,10-methylene-5,6,7,8-tetrahydrofolate binding. Residue alanine 263 participates in (6R)-5,10-methylene-5,6,7,8-tetrahydrofolate binding.

The protein belongs to the thymidylate synthase family. Bacterial-type ThyA subfamily. As to quaternary structure, homodimer.

Its subcellular location is the cytoplasm. The catalysed reaction is dUMP + (6R)-5,10-methylene-5,6,7,8-tetrahydrofolate = 7,8-dihydrofolate + dTMP. It functions in the pathway pyrimidine metabolism; dTTP biosynthesis. Its function is as follows. Catalyzes the reductive methylation of 2'-deoxyuridine-5'-monophosphate (dUMP) to 2'-deoxythymidine-5'-monophosphate (dTMP) while utilizing 5,10-methylenetetrahydrofolate (mTHF) as the methyl donor and reductant in the reaction, yielding dihydrofolate (DHF) as a by-product. This enzymatic reaction provides an intracellular de novo source of dTMP, an essential precursor for DNA biosynthesis. This is Thymidylate synthase from Agrobacterium fabrum (strain C58 / ATCC 33970) (Agrobacterium tumefaciens (strain C58)).